A 469-amino-acid chain; its full sequence is Melanopsin (469 aa).

Residues Met1 to Ile71 are Extracellular-facing. Asn30 carries N-linked (GlcNAc...) asparagine glycosylation. A helical transmembrane segment spans residues Leu72–Tyr92. Residues Thr93–Met106 are Cytoplasmic-facing. The helical transmembrane segment at Leu107 to Phe127 threads the bilayer. At Ala128–Glu143 the chain is on the extracellular side. Cys142 and Cys220 are oxidised to a cystine. Residues Phe144–Ala164 form a helical membrane-spanning segment. The Cytoplasmic portion of the chain corresponds to Leu165 to Ala187. Residues Leu188–Trp208 traverse the membrane as a helical segment. The Extracellular segment spans residues Ser209–Leu237. Residues Leu238–Phe258 traverse the membrane as a helical segment. Residues Arg259 to Leu295 lie on the Cytoplasmic side of the membrane. A helical transmembrane segment spans residues Ile296 to Phe316. Topologically, residues Ala317–Ser328 are extracellular. The helical transmembrane segment at Ser329 to Thr349 threads the bilayer. Residue Lys336 is modified to N6-(retinylidene)lysine. The Cytoplasmic portion of the chain corresponds to His350 to Pro469. The interval Gly409 to Pro469 is disordered.

Belongs to the G-protein coupled receptor 1 family. Opsin subfamily.

It is found in the cell membrane. Its subcellular location is the cell projection. It localises to the axon. The protein localises to the dendrite. The protein resides in the perikaryon. Photoreceptor that binds cis-retinaldehydes. Contributes to pupillar reflex, photoentrainment and other non-image forming responses to light. May be involved in the optokinetic visual tracking response. May be involved in the regulation of retinal hyaloid vessel growth and regression. In Phodopus sungorus (Striped hairy-footed hamster), this protein is Melanopsin (OPN4).